The following is a 121-amino-acid chain: Large ribosomal subunit protein bL12 (121 aa).

The protein belongs to the bacterial ribosomal protein bL12 family. As to quaternary structure, homodimer. Part of the ribosomal stalk of the 50S ribosomal subunit. Forms a multimeric L10(L12)X complex, where L10 forms an elongated spine to which 2 to 4 L12 dimers bind in a sequential fashion. Binds GTP-bound translation factors.

In terms of biological role, forms part of the ribosomal stalk which helps the ribosome interact with GTP-bound translation factors. Is thus essential for accurate translation. This is Large ribosomal subunit protein bL12 from Serratia proteamaculans (strain 568).